The chain runs to 356 residues: Zinc finger CW-type PWWP domain protein 2 (356 aa).

A CW-type zinc finger spans residues 24 to 79 (MYVNKVWVQCENENCLKWRLLSSEDSAKVDHDEPWYCFMNTDSRYNNCSISEEDFP). Cys-33, Cys-38, Cys-60, and Cys-71 together coordinate Zn(2+). The PWWP domain occupies 98-162 (LGSLVLVKLQ…ATFVGHYSIT (65 aa)). A disordered region spans residues 279-307 (QALQPTATPDESEEGHGEEINMGEKLSKC).

Its function is as follows. Histone methylation reader which binds to non-methylated (H3K4me0), monomethylated (H3K4me1), dimethylated (H3K4me2) and trimethylated (H3K4me3) 'Lys-4' on histone H3. The order of binding preference is H3K4me3 &gt; H3K4me2 &gt; H3K4me1 &gt; H3K4me0. The sequence is that of Zinc finger CW-type PWWP domain protein 2 (ZCWPW2) from Homo sapiens (Human).